A 604-amino-acid chain; its full sequence is Elongation factor 4 (604 aa).

The 183-residue stretch at 7-189 (KRIRNFCIIA…SVVDRVPPPA (183 aa)) folds into the tr-type G domain. GTP-binding positions include 19 to 24 (DHGKST) and 136 to 139 (NKID).

Belongs to the TRAFAC class translation factor GTPase superfamily. Classic translation factor GTPase family. LepA subfamily.

The protein localises to the cell inner membrane. The enzyme catalyses GTP + H2O = GDP + phosphate + H(+). Functionally, required for accurate and efficient protein synthesis under certain stress conditions. May act as a fidelity factor of the translation reaction, by catalyzing a one-codon backward translocation of tRNAs on improperly translocated ribosomes. Back-translocation proceeds from a post-translocation (POST) complex to a pre-translocation (PRE) complex, thus giving elongation factor G a second chance to translocate the tRNAs correctly. Binds to ribosomes in a GTP-dependent manner. In Synechococcus sp. (strain CC9311), this protein is Elongation factor 4.